Here is a 279-residue protein sequence, read N- to C-terminus: Probable endonuclease 4 (279 aa).

Positions 69, 109, 145, 179, 182, 216, 229, 231, and 261 each coordinate Zn(2+).

The protein belongs to the AP endonuclease 2 family. The cofactor is Zn(2+).

The enzyme catalyses Endonucleolytic cleavage to 5'-phosphooligonucleotide end-products.. Its function is as follows. Endonuclease IV plays a role in DNA repair. It cleaves phosphodiester bonds at apurinic or apyrimidinic (AP) sites, generating a 3'-hydroxyl group and a 5'-terminal sugar phosphate. This Tolumonas auensis (strain DSM 9187 / NBRC 110442 / TA 4) protein is Probable endonuclease 4.